Consider the following 213-residue polypeptide: Bacteriochlorophyll synthase 23 kDa chain (213 aa).

It participates in porphyrin-containing compound metabolism; bacteriochlorophyll biosynthesis (light-independent). The protein is Bacteriochlorophyll synthase 23 kDa chain (bchJ) of Rhodobacter capsulatus (strain ATCC BAA-309 / NBRC 16581 / SB1003).